The primary structure comprises 411 residues: L-cysteine:1D-myo-inositol 2-amino-2-deoxy-alpha-D-glucopyranoside ligase (411 aa).

Cysteine 43 is a binding site for Zn(2+). L-cysteinyl-5'-AMP contacts are provided by residues 43-46 (CGIT), threonine 58, and 81-83 (NVT). Positions 45-55 (ITPYDATHLGH) match the 'HIGH' region motif. The short motif at 186-191 (QRGGDP) is the 'ERGGDP' region element. Tryptophan 226 contacts L-cysteinyl-5'-AMP. Cysteine 230 lines the Zn(2+) pocket. Position 248–250 (248–250 (GSD)) interacts with L-cysteinyl-5'-AMP. Position 255 (histidine 255) interacts with Zn(2+). L-cysteinyl-5'-AMP is bound at residue isoleucine 282. A 'KMSKS' region motif is present at residues 288-292 (KMSKS).

This sequence belongs to the class-I aminoacyl-tRNA synthetase family. MshC subfamily. As to quaternary structure, monomer. Requires Zn(2+) as cofactor.

It catalyses the reaction 1D-myo-inositol 2-amino-2-deoxy-alpha-D-glucopyranoside + L-cysteine + ATP = 1D-myo-inositol 2-(L-cysteinylamino)-2-deoxy-alpha-D-glucopyranoside + AMP + diphosphate + H(+). Functionally, catalyzes the ATP-dependent condensation of GlcN-Ins and L-cysteine to form L-Cys-GlcN-Ins. This is L-cysteine:1D-myo-inositol 2-amino-2-deoxy-alpha-D-glucopyranoside ligase from Mycobacterium ulcerans (strain Agy99).